The primary structure comprises 38 residues: CHH precursor-related peptide (38 aa).

The tract at residues 18–38 (GALEPSTPLGDLSGSLGHPVE) is disordered.

In terms of tissue distribution, produced by the medulla terminalis X-organ in the eyestalks and transported to the sinus gland where it is stored and released.

The protein localises to the secreted. This Cancer pagurus (Rock crab) protein is CHH precursor-related peptide.